A 77-amino-acid chain; its full sequence is NEDD8-like protein RUB1 (77 aa).

The region spanning 1–74 (MIVKVKTLTG…MQLHLVLTLR (74 aa)) is the Ubiquitin-like domain. A Glycyl lysine isopeptide (Gly-Lys) (interchain with K-? in acceptor proteins) cross-link involves residue Gly-76. Residue Asn-77 is a propeptide.

In terms of assembly, interacts with CDC53 and DCN1.

Functionally, ubiquitin-like protein modifier that can be covalently attached to lysine residues of target proteins. Activated by the dimeric UBA3-ULA1 E1 enzyme and conjugated by the E2 UBC12 to substrate proteins. RUB1-conjugated (neddylated) substrate proteins include the cullins CDC53, RTT101 and CUL3, and the modification enhances the ubiquitin-ligase activity of the corresponding cullin-RING-based E3 ubiquitin-protein ligase complexes (CRLs). In Saccharomyces cerevisiae (strain ATCC 204508 / S288c) (Baker's yeast), this protein is NEDD8-like protein RUB1 (RUB1).